The chain runs to 144 residues: Mediator of RNA polymerase II transcription subunit 21 (144 aa).

It belongs to the Mediator complex subunit 21 family. In terms of assembly, component of the Mediator complex, which is composed of MED1, MED4, MED6, MED7, MED8, MED9, MED10, MED11, MED12, MED13, MED13L, MED14, MED15, MED16, MED17, MED18, MED19, MED20, MED21, MED22, MED23, MED24, MED25, MED26, MED27, MED29, MED30, MED31, CCNC, CDK8 and CDC2L6/CDK11. The MED12, MED13, CCNC and CDK8 subunits form a distinct module termed the CDK8 module. Mediator containing the CDK8 module is less active than Mediator lacking this module in supporting transcriptional activation. Individual preparations of the Mediator complex lacking one or more distinct subunits have been variously termed ARC, CRSP, DRIP, PC2, SMCC and TRAP. Interacts with PPARG. Interacts with THRA in a ligand-dependent fashion.

The protein resides in the nucleus. Component of the Mediator complex, a coactivator involved in the regulated transcription of nearly all RNA polymerase II-dependent genes. Mediator functions as a bridge to convey information from gene-specific regulatory proteins to the basal RNA polymerase II transcription machinery. Mediator is recruited to promoters by direct interactions with regulatory proteins and serves as a scaffold for the assembly of a functional preinitiation complex with RNA polymerase II and the general transcription factors. This chain is Mediator of RNA polymerase II transcription subunit 21 (MED21), found in Macaca fascicularis (Crab-eating macaque).